Reading from the N-terminus, the 790-residue chain is LPS-assembly protein LptD (790 aa).

A signal peptide spans 1–20 (MRMLRWLILSAFSVAGAVQA).

Belongs to the LptD family. Component of the lipopolysaccharide transport and assembly complex. Interacts with LptE and LptA.

The protein resides in the cell outer membrane. Together with LptE, is involved in the assembly of lipopolysaccharide (LPS) at the surface of the outer membrane. This is LPS-assembly protein LptD from Bordetella bronchiseptica (strain ATCC BAA-588 / NCTC 13252 / RB50) (Alcaligenes bronchisepticus).